We begin with the raw amino-acid sequence, 822 residues long: MRRASRSPFILSPVAHAVSRLVLCATLGWTYAGSGHAQVPAPAGGSEVPLGARPPASAPVAAQQETPLKLKSSPALAEEVPNGPGDEGPTFVFGDSVSGRPNLETVIDGNAELRRGATSIRADRIEYYQPEDRVKSRGNVRINNAGNRFEGPELEITLDRFEGFFTQPRYRFLSNGGNGQAERVDFIDDKHLTAHRASYTTCERDNEASWKPAWELRARSFEFDFDEEVGVANGAVLRFKNVPILGFPKFSFPLSDKRKSGLLPPTLNMSSVNGFEVRQPYYFDIAPNRDATFSPAIMTKRGVDLAGEFRYLEPTYKGELRANILPGDKLRNRDRWSYGYQHSGTIDSGLSAIGNLGVNLNLSRVSDNDYWRDFPIASNSTTQRLLAQDATVSWNRGFFAAAVRTLKWQTLQDLSAPIVPPYDRLPQFTANYTRVDAPLLGLGRGFDWSVEGDYTRFSADRTLTGQPNSNRAFTRAQLSHPWLSPAGFITPKMQLHATSYQFDAPLVNGARSASRTVPTFSLDSGLQFERQAGFLGRSFTQTLEPRAFYVRTPYRDQSLLPNYDSGANDFNFATVFTENAFVGNDRISDANLLTLGVTSRLLDPATGAEAVRVGVAQRLRFADQRVTLPGALPITDRISDLLVGASVNWVPQWSFDSTVQYNPKTKQSERSSIGVRYNPGNYRVISAAYRRQRNISEQIDVGWQWPLNDLWGDKGRDLGAGQGQGGGRYYAVGRLNYSVPDRKLVDAIVGVEYDGCCWIGRVVLQRTQNGTATSDTRILFQLELVGFSRIGANPLETLKSNVPRYQYLREKINTPSRFTTYD.

Positions 1 to 37 (MRRASRSPFILSPVAHAVSRLVLCATLGWTYAGSGHA) are cleaved as a signal peptide. Residues 38–97 (QVPAPAGGSEVPLGARPPASAPVAAQQETPLKLKSSPALAEEVPNGPGDEGPTFVFGDSV) are disordered.

Belongs to the LptD family. In terms of assembly, component of the lipopolysaccharide transport and assembly complex. Interacts with LptE and LptA.

It localises to the cell outer membrane. In terms of biological role, together with LptE, is involved in the assembly of lipopolysaccharide (LPS) at the surface of the outer membrane. This chain is LPS-assembly protein LptD, found in Polaromonas sp. (strain JS666 / ATCC BAA-500).